A 262-amino-acid polypeptide reads, in one-letter code: 3-methyl-2-oxobutanoate hydroxymethyltransferase (262 aa).

Mg(2+)-binding residues include aspartate 42 and aspartate 81. 3-methyl-2-oxobutanoate-binding positions include 42–43 (DS), aspartate 81, and lysine 110. Glutamate 112 provides a ligand contact to Mg(2+). The Proton acceptor role is filled by glutamate 180.

Belongs to the PanB family. Homodecamer; pentamer of dimers. It depends on Mg(2+) as a cofactor.

Its subcellular location is the cytoplasm. The catalysed reaction is 3-methyl-2-oxobutanoate + (6R)-5,10-methylene-5,6,7,8-tetrahydrofolate + H2O = 2-dehydropantoate + (6S)-5,6,7,8-tetrahydrofolate. Its pathway is cofactor biosynthesis; (R)-pantothenate biosynthesis; (R)-pantoate from 3-methyl-2-oxobutanoate: step 1/2. Its function is as follows. Catalyzes the reversible reaction in which hydroxymethyl group from 5,10-methylenetetrahydrofolate is transferred onto alpha-ketoisovalerate to form ketopantoate. The sequence is that of 3-methyl-2-oxobutanoate hydroxymethyltransferase from Legionella pneumophila (strain Lens).